The following is a 508-amino-acid chain: Cytochrome P450 monooxygenase lepD (508 aa).

The helical transmembrane segment at 22-42 (IAAAVAVVASIVIYLALSSFF) threads the bilayer. Residues N53 and N416 are each glycosylated (N-linked (GlcNAc...) asparagine). C454 contributes to the heme binding site.

This sequence belongs to the cytochrome P450 family. It depends on heme as a cofactor.

Its subcellular location is the membrane. Functionally, cytochrome P450 monooxygenase; part of the gene cluster 23 that mediates the biosynthesis of a family of 2-pyridones known as leporins. The hybrid PKS-NRPS synthetase lepA and the enoyl reductase lepG are responsible for fusion of phenylalanine with a hexaketide and subsequent release of the stable tetramic acid precursor, pre-leporin C. Because lepA lacks a designated enoylreductase (ER) domain, the required activity is provided the enoyl reductase lepG. It is possible that the dehydrogenase lepF also participates in production of pre-leporin C. Cytochrome P450 monooxygenase lepH is then required for the ring expansion step to yield leporin C. Leporin C is then presumably further oxidized by the N-hydroxylase lepD to form leporin B. LepI may possess a function in biosynthesis upstream of lepA. Leporin B is further oxidized in the presence of ferric ion to give the leporin B trimer-iron chelate, but whether or not this reaction is catalyzed by an enzyme in the pathway or by ferric ion is not determined yet. The chain is Cytochrome P450 monooxygenase lepD from Aspergillus flavus (strain ATCC 200026 / FGSC A1120 / IAM 13836 / NRRL 3357 / JCM 12722 / SRRC 167).